Reading from the N-terminus, the 325-residue chain is Treponemal membrane protein B (325 aa).

Residues 1-24 (MKTRNFSLVSALYVLLGVPLFVSA) form the signal peptide. An EAARKAAE repeat occupies 159–166 (EAARKAAE). The ARKLEEQRIAAQKAQEERKRAEE repeat unit spans residues 167-189 (ARKLEEQRIAAQKAQEERKRAEE). A disordered region spans residues 176–224 (AAQKAQEERKRAEEEAARKAAEARKLEEQRIAAQKAQEERKRAEEEAAR). The EAARKAAE repeat unit spans residues 190 to 197 (EAARKAAE). The ARKLEEQRIAAQKAQEERKRAEE repeat unit spans residues 198–220 (ARKLEEQRIAAQKAQEERKRAEE). The stretch at 221–228 (EAARKAAE) is one EAARKAAE repeat. Residues 229–236 (EAARKAEE) form an EAARKAEE repeat.

It to T.phagedenis TmpB.

Its subcellular location is the cell outer membrane. Its function is as follows. Tmp may serve as a porin or transport protein for large molecules. The sequence is that of Treponemal membrane protein B (tmpB) from Treponema pallidum (strain Nichols).